The chain runs to 553 residues: Chaperonin GroEL 2 (553 aa).

ATP contacts are provided by residues 29 to 32 (TLGP), 86 to 90 (DGTTT), glycine 414, and aspartate 495.

This sequence belongs to the chaperonin (HSP60) family. In terms of assembly, forms a cylinder of 14 subunits composed of two heptameric rings stacked back-to-back. Interacts with the co-chaperonin GroES.

It is found in the cytoplasm. It carries out the reaction ATP + H2O + a folded polypeptide = ADP + phosphate + an unfolded polypeptide.. Functionally, together with its co-chaperonin GroES, plays an essential role in assisting protein folding. The GroEL-GroES system forms a nano-cage that allows encapsulation of the non-native substrate proteins and provides a physical environment optimized to promote and accelerate protein folding. In Gloeobacter violaceus (strain ATCC 29082 / PCC 7421), this protein is Chaperonin GroEL 2.